A 96-amino-acid polypeptide reads, in one-letter code: Defensin-like protein 69 (96 aa).

An N-terminal signal peptide occupies residues 1 to 19 (MGSSKLLVAFTLIVMMTIS). 4 disulfide bridges follow: Cys-37–Cys-86, Cys-41–Cys-64, Cys-50–Cys-84, and Cys-54–Cys-85.

Belongs to the DEFL family.

It is found in the secreted. The polypeptide is Defensin-like protein 69 (Arabidopsis thaliana (Mouse-ear cress)).